Here is an 80-residue protein sequence, read N- to C-terminus: Exodeoxyribonuclease 7 small subunit (80 aa).

It belongs to the XseB family. As to quaternary structure, heterooligomer composed of large and small subunits.

The protein resides in the cytoplasm. The enzyme catalyses Exonucleolytic cleavage in either 5'- to 3'- or 3'- to 5'-direction to yield nucleoside 5'-phosphates.. Its function is as follows. Bidirectionally degrades single-stranded DNA into large acid-insoluble oligonucleotides, which are then degraded further into small acid-soluble oligonucleotides. This chain is Exodeoxyribonuclease 7 small subunit, found in Rickettsia bellii (strain OSU 85-389).